The sequence spans 2328 residues: MMAVHLAVASLRRNESTIAFACGTHLNLEPNDWVSLTKMNMISPDGRSKMFDELANGYGRGEGIGVICLKRLDAAIRDGDHIECVIRETGTNQDGHTKGITAPSAEAQAALIRKTYRSAGLDPTQVGSRPSFFEAHGTGTHVGDPLEAKAIQAAFFPPGQEYSDDEVLYIGSVKTIVGHTEGTAGIAGLLRAALAVRYGSIPPNLLYTRMNAEVAQYANHLRVVTAANPWPTLPVGCPRRASVNSFGFGGSNVHVIVESYVNTAARRVTSIPSFGAREPIFTPFTFSAISERALMSLMEKYLKYLEDPKSSVSPRDLAWTMQYKRSEFPFRSAMSALTVEDLRKQLRKATDILSDESNTSHIIRASQSTQPLIMAIFTGQGAQWPGMGKDIIEQSPHACDIIARLDDSLASLPEDDRPTWKIREELAIDSSRSRMDEAALSQPLTTAVQILLVDLLDIAGVKVRTVVGHSSGEIAAAYAAGMITAEDAIRVAYYRGLHSKLAGGVAGQKGAMITTFLTPNQAVDLCNLPEFRGRIVPAAFNGPTAVTLSGDVDAVERVLLMLEAQNIFARKLNVEKAYHSHHMKACAPPYIQSLEQCGVPVMPPFMDSPIWFSSVNPGKRMDPQKALHGSYWAENLLSPVRFSDAITTAISETGVPDIFLEIGPHPALMKPVLQIISDVAKDGTVYSGLLKRSSNSILSFSNAMGSIWERFGRCAVNFSKLETTLSGGSPPVPAKDLPTYPWLHDREYWWENRWLRRRFEAAYPPNELLGEELSMGAQHETKWRSFLQPKDVPWLLDHKLNGVAVLPGAAYVAMAATAARRIYRKQTIIMIELNDLSFKLPITFPDDHTSIETVLTVVNIRSTTQQGQADFVFDFCSHQRQDELMTAARGSLTVQFGDDVNRTYPERLSQHSALTELDLDTFYNNLEGRGYNYTGPFRSITSLQRRMNFSTGRMDFTPSDMTFHPALLDGLFQATFAAENYPGDSAMLDFRVPSLVRSIKVFPARCDEMTAMMKEKVDFQVSRTGPSEYSGLLLCENGSGTAIQMDGFCTAPFRMSTPEEDVKMFSEVAWRQYVRDARSLTSICVLAAHEKEPTLACERVGFYYLRRLNETIPPEEEKQAAPHLRRLLEFARMVVCENLLGLLSHMSPEWIHDTEADIAKIIAEYSKLIDMRLVDAVGRAYPSIIRGHVSALSVLTEDGMLTQLYSEGLGFYQANSTMTRLVSTISNQYPNIHILEVGAGTGSATSGILPTTSYSSYTFTDVSPAFLATAKDKFRRYSDKMAFTTLDLDKDFEDQGFTANSFEVIVASNVLHAVTDINASLIRIRRLLRPGGYLVCTELPESYCVKTTVIMGALPGWWQGAPRGRNWSPALTEPQWDRVLKDTGFAGLDAISPLDNDLSQSYRVFVAQAVDERVVSLRDPLTHPPSRSHDSIMIIGCESLVKSQFLEQAGQILLPSFQDVIHVPRLEEITQDVTVPYSVLCLAELGKPVFQDMTAAKWSALQTLLGQATDIIWVTTGHKSPKKVEESYKSMAIGLGRVVRNELRDLRLRFVDVDDLNTLTARSVSQATLEWYMLGQWAAQGWGNQVLFPHDTELAFENGLILAPSVVHSKTKNDHYNSQQRRIVREAQPYRVPIELVYSLSTKQYDLHEAHHVPAYALEDTITMKILYTTLYALKLKKVGFLFIGMGICPDGKYALVVSEKNGSILRLPRHTVYPFTSSRKPTQRDLWITAARIIAGRVVSGCNLTGKLLVLVTDATLLTIIRDEATRQHKSVVFITSNPNFASKQALFLHHSALDVQVRQSIPSQIGLLVNLSNRLDDKNLFKRVRSVLRDTCTEIKTIDAILRTTSSRYWSPETLGEIKVDVVDEKYLMETANMPGNMSNQAEPTILSPKNVSKQAFNNPLTVLDWTVTTHIPVTIQPATAIAKFSGNKCYIIIGTSDLAQSVCELMVSNGAKYVVMASRNPTRLSGWVQDMASRGAYIDIKSVDVTDAMSVRKMFSSIRNLTNDRGTSAPPIAGLVHMGLGLKDAAFSALTFEDLQIATDVKAKGSLLLHEQLQEEKLDFFILTSSISYVAGNPGQANYSCANAFMAGLANYRRDMGLAASVVHLGHVAGVGYITRMSQARGVVMEDARKHGLLPISERDLHQIYAEAVLASPADSGRNPEIITGFPELTSDMLESSVWGKQPIFTHLVTAGTRPSTIVQPKPHLSVRERLNNQLSSTITSAPEKAESSSHDIIRNGLVERLSVLLQVDVKQIDEDISLLDMGIDSLVASEIGSWARKELRVQIPHSMIFGGASVANIVDFAVAHLDKEWLALKNGSGEGVGKGK.

Residues 1–259 form the Ketosynthase family 3 (KS3) domain; sequence MMAVHLAVAS…GSNVHVIVES (259 aa). The tract at residues 376–696 is malonyl-CoA:ACP transacylase (MAT) domain; the sequence is IFTGQGAQWP…SGLLKRSSNS (321 aa). Positions 766 to 899 are N-terminal hotdog fold; sequence NELLGEELSM…GSLTVQFGDD (134 aa). Positions 766 to 1057 are dehydratase (DH) domain; it reads NELLGEELSM…FCTAPFRMST (292 aa). In terms of domain architecture, PKS/mFAS DH spans 766 to 1059; that stretch reads NELLGEELSM…TAPFRMSTPE (294 aa). His798 serves as the catalytic Proton acceptor; for dehydratase activity. A C-terminal hotdog fold region spans residues 914-1059; the sequence is LTELDLDTFY…TAPFRMSTPE (146 aa). Catalysis depends on Asp969, which acts as the Proton donor; for dehydratase activity. Positions 1198 to 1419 are methyltransferase (MT) domain; the sequence is DGMLTQLYSE…VDERVVSLRD (222 aa). Positions 1932-2111 are ketoreductase (KR)domain; sequence CYIIIGTSDL…AASVVHLGHV (180 aa). The Carrier domain maps to 2231-2309; that stretch reads SSSHDIIRNG…NIVDFAVAHL (79 aa). Position 2269 is an O-(pantetheine 4'-phosphoryl)serine (Ser2269).

Requires pantetheine 4'-phosphate as cofactor.

Functionally, reducing polyketide synthase; part of a gene cluster that mediates the biosynthesis of a yet unidentified natural product. This chain is Reducing polyketide synthase Preu2, found in Preussia isomera (Coprophilous fungus).